We begin with the raw amino-acid sequence, 214 residues long: 3-isopropylmalate dehydratase small subunit (214 aa).

It belongs to the LeuD family. LeuD type 1 subfamily. Heterodimer of LeuC and LeuD.

The enzyme catalyses (2R,3S)-3-isopropylmalate = (2S)-2-isopropylmalate. The protein operates within amino-acid biosynthesis; L-leucine biosynthesis; L-leucine from 3-methyl-2-oxobutanoate: step 2/4. Its function is as follows. Catalyzes the isomerization between 2-isopropylmalate and 3-isopropylmalate, via the formation of 2-isopropylmaleate. This chain is 3-isopropylmalate dehydratase small subunit, found in Pseudomonas putida (strain ATCC 47054 / DSM 6125 / CFBP 8728 / NCIMB 11950 / KT2440).